The sequence spans 232 residues: Large ribosomal subunit protein uL1 (232 aa).

The protein belongs to the universal ribosomal protein uL1 family. Part of the 50S ribosomal subunit.

In terms of biological role, binds directly to 23S rRNA. The L1 stalk is quite mobile in the ribosome, and is involved in E site tRNA release. Its function is as follows. Protein L1 is also a translational repressor protein, it controls the translation of the L11 operon by binding to its mRNA. The protein is Large ribosomal subunit protein uL1 of Aromatoleum aromaticum (strain DSM 19018 / LMG 30748 / EbN1) (Azoarcus sp. (strain EbN1)).